We begin with the raw amino-acid sequence, 1514 residues long: ABC transporter C family member 3 (1514 aa).

10 consecutive transmembrane segments (helical) span residues 35-55 (PLFL…VLFF), 83-103 (ALFC…LSGF), 116-136 (LVSS…SICL), 153-173 (LWLV…FVMY), 183-203 (LLVF…VAVL), 325-345 (ILVT…GPAL), 364-386 (YVLV…HWFF), 439-459 (WYMH…WILY), 463-483 (GLAS…NFPF), and 551-571 (FVFW…CILL). Positions 325–606 (ILVTAFFAFI…LPDTISMIVQ (282 aa)) constitute an ABC transmembrane type-1 1 domain. An ABC transporter 1 domain is found at 640–863 (VEVINSTLSW…GTDFMELIGA (224 aa)). An ATP-binding site is contributed by 675–682 (GTVGSGKS). 5 consecutive transmembrane segments (helical) span residues 940 to 960 (YITL…QVLF), 987 to 1007 (LSTL…CILL), 1077 to 1097 (IGII…FIPV), 1181 to 1201 (LSSL…TGVI), and 1205 to 1225 (LAGL…WLIW). Residues 950–1232 (VPFILLGQVL…LIWTLCNLEN (283 aa)) form the ABC transmembrane type-1 2 domain. An ABC transporter 2 domain is found at 1271 to 1503 (IRDLQVRYAP…KSSSFSKLVA (233 aa)). Residue 1303–1310 (GRTGSGKS) coordinates ATP.

This sequence belongs to the ABC transporter superfamily. ABCC family. Conjugate transporter (TC 3.A.1.208) subfamily. As to expression, ubiquitous.

The protein resides in the membrane. The catalysed reaction is ATP + H2O + xenobioticSide 1 = ADP + phosphate + xenobioticSide 2.. Glutathione-conjugate transport is inhibited by decyl-glutathione and, to a lower extent, by GS-GS, but not by GSH. All transports are inhibited by vanadate. Pump for glutathione S-conjugates. Mediates the transport of glutathione conjugates such as chlorodinitrobenzene-GS (DNB-GS), and of chlorophyll catabolites such as Bn-NCC-1. Also transports heavy metals such as cadmium (Cd). The polypeptide is ABC transporter C family member 3 (ABCC3) (Arabidopsis thaliana (Mouse-ear cress)).